The primary structure comprises 709 residues: Phosphoribosylformylglycinamidine synthase subunit PurL (709 aa).

Residue His36 is part of the active site. The ATP site is built by Tyr39 and Lys80. Glu82 is a Mg(2+) binding site. Substrate-binding positions include 83 to 86 and Arg105; that span reads SHNH. The Proton acceptor role is filled by His84. Residue Asp106 coordinates Mg(2+). Gln226 provides a ligand contact to substrate. Asp252 contributes to the Mg(2+) binding site. 294–296 provides a ligand contact to substrate; the sequence is ETQ. ATP contacts are provided by Asp470 and Gly507. A substrate-binding site is contributed by Ser510.

This sequence belongs to the FGAMS family. Monomer. Part of the FGAM synthase complex composed of 1 PurL, 1 PurQ and 2 PurS subunits.

Its subcellular location is the cytoplasm. It carries out the reaction N(2)-formyl-N(1)-(5-phospho-beta-D-ribosyl)glycinamide + L-glutamine + ATP + H2O = 2-formamido-N(1)-(5-O-phospho-beta-D-ribosyl)acetamidine + L-glutamate + ADP + phosphate + H(+). It functions in the pathway purine metabolism; IMP biosynthesis via de novo pathway; 5-amino-1-(5-phospho-D-ribosyl)imidazole from N(2)-formyl-N(1)-(5-phospho-D-ribosyl)glycinamide: step 1/2. Part of the phosphoribosylformylglycinamidine synthase complex involved in the purines biosynthetic pathway. Catalyzes the ATP-dependent conversion of formylglycinamide ribonucleotide (FGAR) and glutamine to yield formylglycinamidine ribonucleotide (FGAM) and glutamate. The FGAM synthase complex is composed of three subunits. PurQ produces an ammonia molecule by converting glutamine to glutamate. PurL transfers the ammonia molecule to FGAR to form FGAM in an ATP-dependent manner. PurS interacts with PurQ and PurL and is thought to assist in the transfer of the ammonia molecule from PurQ to PurL. The sequence is that of Phosphoribosylformylglycinamidine synthase subunit PurL from Saccharolobus solfataricus (strain ATCC 35092 / DSM 1617 / JCM 11322 / P2) (Sulfolobus solfataricus).